Here is a 617-residue protein sequence, read N- to C-terminus: MWNDEDNNPYGTSFDRRDSQSSSINPTSPSTREYQRFEPPQTPTSDSDNEHNHGVIHDDSDDDDEDLTQDAGPKRKPGGYDSRIEQILYENPKLSILITDAGKSIESGGRYIVYTIKTGDLEVRRRYSEFASLRDALTRLHPTLIVPPIPEKHTMADYAANPTNAKQDQQIIDLRKRMLAVFLNRCRRMEEIRTDGVWWRFFDPNASWSEVLHSHPVASIPKSILKAPPLNPANPTPAHNYLPIPAASAKLKTVAGTNHDNSSGHIQAGPHAFGRFPPEGHNLGEQELDPYFISYESSIKDLEQLLTGPMEKVNRRTLSHLSSLAADLCELGSVYNAFAVSEQAPSLGPAIERIGQAADLSYIATEELSGSLGASFAEPMREHAQFAGVVRSVLKYRVLKRVQQDLTTEELSKKRALLDQLEQSEAEARRIENYLSSSQQISPPPKRSTSLREPPSHQRRDGSQEDTESIDSDFPGTHGDFSSHTPSASQGLPERSTSVPSHKKMPSGNSITNKIFGPIRHAVQGVVDVDPERTRRDLIGKTRESIGQLEQAQVVSEKDVKEASASVLKDMKRFQKDKEDDLRRYMLAYAQSQIEWAKKSKQQWEEARAEVEKIDES.

Residues 1–83 are disordered; sequence MWNDEDNNPY…KRKPGGYDSR (83 aa). The segment covering 20-31 has biased composition (low complexity); the sequence is QSSSINPTSPST. The span at 48-58 shows a compositional bias: basic and acidic residues; it reads DNEHNHGVIHD. Over residues 59–68 the composition is skewed to acidic residues; that stretch reads DSDDDDEDLT. The PX domain maps to 89–209; the sequence is YENPKLSILI…RFFDPNASWS (121 aa). Residues Arg126, Ser128, Lys152, and Arg175 each contribute to the a 1,2-diacyl-sn-glycero-3-phospho-(1D-myo-inositol-3-phosphate) site. Residues 403 to 440 adopt a coiled-coil conformation; it reads QQDLTTEELSKKRALLDQLEQSEAEARRIENYLSSSQQ. Residues 434–516 form a disordered region; the sequence is YLSSSQQISP…SGNSITNKIF (83 aa). Over residues 454-463 the composition is skewed to basic and acidic residues; that stretch reads PPSHQRRDGS. Positions 480-500 are enriched in polar residues; sequence DFSSHTPSASQGLPERSTSVP.

It belongs to the sorting nexin family. Forms a complex with SNX4/ATG24 and ATG17.

It is found in the endosome membrane. The protein resides in the preautophagosomal structure membrane. In terms of biological role, required for cytoplasm to vacuole transport (Cvt), pexophagy and mitophagy. Also involved in endoplasmic reticulum-specific autophagic process and is essential for the survival of cells subjected to severe ER stress. Functions in protein retrieval from the endocytic pathway. Required for proper sorting of the v-SNARE protein SNC1. Autophagy is required for proper vegetative growth, asexual/sexual reproduction, and full virulence. Autophagy is particularly involved in the biosynthesis of deoxynivalenol (DON), an important virulence determinant. The protein is Autophagy-related protein 20 of Gibberella zeae (strain ATCC MYA-4620 / CBS 123657 / FGSC 9075 / NRRL 31084 / PH-1) (Wheat head blight fungus).